The sequence spans 339 residues: tRNA pseudouridine synthase D (339 aa).

The Nucleophile role is filled by aspartate 80. Positions 155-311 (GFPNYFTEQR…AKGFSWAFEL (157 aa)) constitute a TRUD domain.

The protein belongs to the pseudouridine synthase TruD family.

It catalyses the reaction uridine(13) in tRNA = pseudouridine(13) in tRNA. Its function is as follows. Responsible for synthesis of pseudouridine from uracil-13 in transfer RNAs. The protein is tRNA pseudouridine synthase D of Haemophilus influenzae (strain PittEE).